Reading from the N-terminus, the 510-residue chain is Photosystem II CP47 reaction center protein (510 aa).

Residues 2–16 (GLPWYRVHTVLINDP) are Cytoplasmic-facing. A helical transmembrane segment spans residues 17–37 (GRLIAAHLMHTALVAGWAGSM). At 38–94 (ALYELATFDPSDPVLNPMWRQGMFVLPFMARLGVTGSWSGWSITGETGIDPGFWSFE) the chain is on the lumenal side. Residues 95–116 (GVALAHIVLSGLLFLAACWHWV) traverse the membrane as a helical segment. Residues 117 to 134 (YWDLELFRDPRTGEPALD) lie on the Cytoplasmic side of the membrane. Residues 135–157 (LPKMFGIHLFLAGLLCFGFGAFH) traverse the membrane as a helical segment. Residues 158–196 (LTGLFGPGMWVSDPYGLTGSVQPVAPEWGPDGFNPYNPG) are Lumenal-facing. The chain crosses the membrane as a helical span at residues 197–218 (GVVAHHIAAGIVGIIAGLFHIL). At 219 to 233 (VRPPQRLYKALRMGN) the chain is on the cytoplasmic side. A helical transmembrane segment spans residues 234 to 254 (IETVLSSSIAAVFFAAFVVAG). Topologically, residues 255–450 (TMWYGSATTP…GIFRTSPRGW (196 aa)) are lumenal. Residues 451 to 473 (FTFAHAVFALLFFFGHIWHGART) traverse the membrane as a helical segment. Residues 474-510 (LFRDVFSGIDPELSPEQVEWGFYQKVGDVTTRRKEAV) are Cytoplasmic-facing.

In terms of assembly, PSII is composed of 1 copy each of membrane proteins PsbA, PsbB, PsbC, PsbD, PsbE, PsbF, PsbH, PsbI, PsbJ, PsbK, PsbL, PsbM, PsbT, PsbX, PsbY, PsbZ, Psb30/Ycf12, peripheral proteins PsbO, CyanoQ (PsbQ), PsbU, PsbV and a large number of cofactors. It forms dimeric complexes. Part of a photosystem II (PSII) assembly intermediate complex PSII-I; crystallized from a strain deleted of psbJ, it forms monomeric PSII before addition of the oxygen evolving complex. PSII-I includes 3 assembly factors not found in mature PSII (Psb27, Psb28 and Psb34). Requires Binds multiple chlorophylls. PSII binds additional chlorophylls, carotenoids and specific lipids. as cofactor.

It is found in the cellular thylakoid membrane. In terms of biological role, one of the components of the core complex of photosystem II (PSII). It binds chlorophyll and helps catalyze the primary light-induced photochemical processes of PSII. PSII is a light-driven water:plastoquinone oxidoreductase, using light energy to abstract electrons from H(2)O, generating O(2) and a proton gradient subsequently used for ATP formation. The sequence is that of Photosystem II CP47 reaction center protein from Thermosynechococcus vestitus (strain NIES-2133 / IAM M-273 / BP-1).